The chain runs to 316 residues: Beta-ketoacyl-[acyl-carrier-protein] synthase III 1 (316 aa).

Residues Cys112 and His243 contribute to the active site. An ACP-binding region spans residues 244 to 248 (QANYR). The active site involves Asn273.

It belongs to the thiolase-like superfamily. FabH family. As to quaternary structure, homodimer.

The protein localises to the cytoplasm. It carries out the reaction malonyl-[ACP] + acetyl-CoA + H(+) = 3-oxobutanoyl-[ACP] + CO2 + CoA. The protein operates within lipid metabolism; fatty acid biosynthesis. Its function is as follows. Catalyzes the condensation reaction of fatty acid synthesis by the addition to an acyl acceptor of two carbons from malonyl-ACP. Catalyzes the first condensation reaction which initiates fatty acid synthesis and may therefore play a role in governing the total rate of fatty acid production. Possesses both acetoacetyl-ACP synthase and acetyl transacylase activities. Its substrate specificity determines the biosynthesis of branched-chain and/or straight-chain of fatty acids. The sequence is that of Beta-ketoacyl-[acyl-carrier-protein] synthase III 1 from Vibrio cholerae serotype O1 (strain ATCC 39315 / El Tor Inaba N16961).